Reading from the N-terminus, the 137-residue chain is Glutamate mutase sigma subunit (137 aa).

A B12-binding domain is found at 3–137; the sequence is KKTIVLGVIG…ADLKEDLNIK (135 aa). Adenosylcob(III)alamin-binding positions include 13–17, H16, 61–63, and 93–97; these read SDCHA, SSL, and NIVVG.

The protein belongs to the methylaspartate mutase GlmS subunit family. Heterotetramer composed of 2 epsilon subunits (GlmE) and 2 sigma subunits (GlmS). GlmE exists as a homodimer and GlmS as a monomer. It depends on adenosylcob(III)alamin as a cofactor.

It catalyses the reaction (2S,3S)-3-methyl-L-aspartate = L-glutamate. It functions in the pathway amino-acid degradation; L-glutamate degradation via mesaconate pathway; acetate and pyruvate from L-glutamate: step 1/4. Catalyzes the carbon skeleton rearrangement of L-glutamate to L-threo-3-methylaspartate ((2S,3S)-3-methylaspartate). The sequence is that of Glutamate mutase sigma subunit from Clostridium tetani (strain Massachusetts / E88).